The chain runs to 195 residues: Thymidine kinase (195 aa).

ATP-binding positions include 15 to 22 (GPMYSGKS), E23, 57 to 58 (SH), and 88 to 91 (DEVQ). The Proton acceptor role is filled by E89. F120 serves as a coordination point for substrate. Zn(2+)-binding residues include C145 and C148. Y179 provides a ligand contact to substrate. 2 residues coordinate Zn(2+): C183 and C186.

The protein belongs to the thymidine kinase family.

Its subcellular location is the cytoplasm. The catalysed reaction is thymidine + ATP = dTMP + ADP + H(+). This chain is Thymidine kinase, found in Clostridium acetobutylicum (strain ATCC 824 / DSM 792 / JCM 1419 / IAM 19013 / LMG 5710 / NBRC 13948 / NRRL B-527 / VKM B-1787 / 2291 / W).